The following is a 543-amino-acid chain: Vibriobactin-specific 2,3-dihydroxybenzoate-AMP ligase (543 aa).

A helical transmembrane segment spans residues 240 to 259 (FPLSSPGALGVFWAGGCVVL).

This sequence belongs to the ATP-dependent AMP-binding enzyme family.

Its subcellular location is the cell inner membrane. The enzyme catalyses 2,3-dihydroxybenzoate + holo-[ACP] + ATP = 2,3-dihydroxybenzoyl-[ACP] + AMP + diphosphate. It participates in siderophore biosynthesis; vibriobactin biosynthesis. In terms of biological role, activation of the carboxylate group of 2,3-dihydroxy-benzoate (DHB), via ATP-dependent PPi exchange reactions, to the acyladenylate, preparing that molecule for the final stages of vibriobactin synthesis. This chain is Vibriobactin-specific 2,3-dihydroxybenzoate-AMP ligase (vibE), found in Vibrio cholerae serotype O1 (strain ATCC 39315 / El Tor Inaba N16961).